The primary structure comprises 192 residues: MELLGQKVKEDGVVIDEKILKVDGFLNHQIDAKLMNEVGRTFYEQFKDKGITKILTIEASGIAPAIMAALHFDVPCLFAKKAKPSTLTDGYYETSIHSFTKNKTSTVIVSKEFLSEEDTVLIIDDFLANGDASLGLYDIAQQANAKTAGIGIVVEKSFQNGHQRLEEAGLTVSSLCKVASLEGNKVTLVGEE.

Residues leucine 20 and asparagine 27 each contribute to the xanthine site. 128 to 132 (ANGDA) contacts 5-phospho-alpha-D-ribose 1-diphosphate. Xanthine is bound at residue lysine 156.

Belongs to the purine/pyrimidine phosphoribosyltransferase family. Xpt subfamily. Homodimer.

It localises to the cytoplasm. The enzyme catalyses XMP + diphosphate = xanthine + 5-phospho-alpha-D-ribose 1-diphosphate. The protein operates within purine metabolism; XMP biosynthesis via salvage pathway; XMP from xanthine: step 1/1. Functionally, converts the preformed base xanthine, a product of nucleic acid breakdown, to xanthosine 5'-monophosphate (XMP), so it can be reused for RNA or DNA synthesis. In Staphylococcus aureus (strain Mu3 / ATCC 700698), this protein is Xanthine phosphoribosyltransferase.